We begin with the raw amino-acid sequence, 1404 residues long: Proteoglycan 4 (1404 aa).

The N-terminal stretch at 1-24 (MAWKTLPIYLLLLLSVFVIQQVSS) is a signal peptide. SMB domains lie at 26–69 (DLSS…AELS) and 66–108 (AELS…AEVH). Intrachain disulfides connect C30–C34, C30–C46, C34–C64, C44–C46, C44–C57, C50–C56, C57–C64, C70–C74, C70–C86, C74–C104, C84–C86, C84–C97, C90–C96, and C97–C104. The disordered stretch occupies residues 111–966 (TSPPSSKKAP…TTQVTSTTTQ (856 aa)). S123 and S136 each carry an O-linked (GalNAc...) serine glycan. Basic residues predominate over residues 132–146 (TTKRSPKPPNKKKTK). Residues 166–177 (SSSSSSSSSSSS) are compositionally biased toward low complexity. Over residues 193 to 205 (ELQKKLKVKDNKK) the composition is skewed to basic and acidic residues. A glycan (N-linked (GlcNAc...) asparagine) is linked at N206. A compositionally biased stretch (polar residues) spans 235-252 (TPDTSTTQHNKVSTSPKI). Residues T240 and T253 are each glycosylated (O-linked (GalNAc...) threonine). A compositionally biased stretch (polar residues) spans 266-276 (PNSDTSKETSL). O-linked (GalNAc...) threonine glycans are attached at residues T277, T291, and T305. S306 is a glycosylation site (O-linked (GalNAc...) serine). T310 carries O-linked (GalNAc...) threonine glycosylation. An O-linked (GalNAc...) serine glycan is attached at S317. T324, T332, and T338 each carry an O-linked (GalNAc...) threonine glycan. 2 stretches are compositionally biased toward low complexity: residues 329–348 (AKPT…TTPK) and 356–405 (KEPA…KEPA). The stretch at 348-355 (KEPTPTTP) is repeat 1. The 59 X 8 AA repeats of K-X-P-X-P-T-T-X stretch occupies residues 348–855 (KEPTPTTPKE…TPETPPPTTS (508 aa)). The 2; approximate repeat unit spans residues 356 to 363 (KEPASTTP). Copy 3 of the repeat occupies 364-371 (KEPTPTTI). T367 carries O-linked (GalNAc...) threonine glycosylation. The 4; approximate repeat unit spans residues 372-378 (KSAPTTP). The O-linked (GalNAc...) serine glycan is linked to S373. Residues T376, T384, and T385 are each glycosylated (O-linked (GalNAc...) threonine). Repeat unit 5 spans residues 379–386 (KEPAPTTT). A 6; approximate repeat occupies 387–393 (KSAPTTP). A glycan (O-linked (GalNAc...) serine) is linked at S388. Residues T391, T399, T400, T407, T408, T415, and T423 are each glycosylated (O-linked (GalNAc...) threonine). Repeat copies occupy residues 394–401 (KEPAPTTT), 402–409 (KEPAPTTP), 410–417 (KEPAPTTT), and 418–425 (KEPAPTTT). Over residues 413 to 431 (APTTTKEPAPTTTKSAPTT) the composition is skewed to low complexity. Residues 426 to 432 (KSAPTTP) form an 11; approximate repeat. Residue S427 is glycosylated (O-linked (GalNAc...) serine). O-linked (GalNAc...) threonine glycosylation is found at T430, T438, T439, T446, T447, T454, and T455. Pro residues-rich tracts occupy residues 432 to 467 (PKEP…PKEP) and 476 to 506 (PTTP…PKEP). 4 consecutive repeat copies span residues 433–440 (KEPAPTTP), 441–448 (KKPAPTTP), 449–456 (KEPAPTTP), and 457–464 (KEPTPTTP). One copy of the 16; approximate repeat lies at 465–471 (KEPAPTT). The stretch at 472–479 (KEPAPTTP) is repeat 17. O-linked (GalNAc...) threonine glycans are attached at residues T477, T478, T485, T493, T494, T501, T502, and T509. An 18; approximate repeat occupies 480-487 (KEPAPTAP). The 19; approximate repeat unit spans residues 488–495 (KKPAPTTP). 4 consecutive repeat copies span residues 496-503 (KEPAPTTP), 504-511 (KEPAPTTT), 512-519 (KEPSPTTP), and 520-527 (KEPAPTTT). Residues 523–561 (APTTTKSAPTTTKEPAPTTTKSAPTTPKEPSPTTTKEPA) show a composition bias toward low complexity. T525 carries O-linked (GalNAc...) threonine glycosylation. The 24; approximate repeat unit spans residues 528-534 (KSAPTTT). A glycan (O-linked (GalNAc...) serine) is linked at S529. O-linked (GalNAc...) threonine glycans are attached at residues T532, T540, and T541. Copy 25 of the repeat occupies 535-542 (KEPAPTTT). A 26; approximate repeat occupies 543 to 549 (KSAPTTP). 6 tandem repeats follow at residues 550 to 557 (KEPSPTTT), 558 to 565 (KEPAPTTP), 566 to 573 (KEPAPTTP), 574 to 581 (KKPAPTTP), 582 to 589 (KEPAPTTP), and 590 to 597 (KEPAPTTT). S553 carries O-linked (GalNAc...) serine glycosylation. O-linked (GalNAc...) threonine glycans are attached at residues T555, T563, T564, T571, T572, T579, T580, T587, T588, T595, T603, T604, T611, T612, T616, T619, and T627. The span at 562–592 (PTTPKEPAPTTPKKPAPTTPKEPAPTTPKEP) shows a compositional bias: pro residues. Residues 598–605 (KKPAPTTP) form a 33; approximate repeat. The segment covering 602-611 (PTTPKEPAPT) has biased composition (pro residues). Repeat 34 spans residues 606–613 (KEPAPTTP). Residues 612–636 (TPKETAPTTPKKLTPTTPEKLAPTT) show a composition bias toward low complexity. The 35; approximate repeat unit spans residues 614–621 (KETAPTTP). The stretch at 622 to 629 (KKLTPTTP) is one 36; approximate repeat. One copy of the 37; approximate repeat lies at 638–645 (EKPAPTTP). Residues 653–667 (PEEPTPTTPEEPAPT) are compositionally biased toward pro residues. Residues 662–669 (EEPAPTTP) form a 38; approximate repeat. T676, T683, T684, T691, T692, T699, T700, T704, and T707 each carry an O-linked (GalNAc...) threonine glycan. Over residues 677-699 (PKEPAPTTPKEPAPTTPKEPAPT) the composition is skewed to pro residues. A run of 3 repeats spans residues 678–685 (KEPAPTTP), 686–693 (KEPAPTTP), and 694–701 (KEPAPTTP). Positions 700 to 721 (TPKETAPTTPKGTAPTTLKEPA) are enriched in low complexity. Residues 702–709 (KETAPTTP) form a 42; approximate repeat. A 43; approximate repeat occupies 710–717 (KGTAPTTL). Copy 44 of the repeat occupies 718–725 (KEPAPTTP). O-linked (GalNAc...) threonine glycans are attached at residues T723, T724, and T736. The span at 728-761 (PAPKELAPTTTKEPTSTTSDKPAPTTPKGTAPTT) shows a compositional bias: low complexity. A 45; approximate repeat occupies 731–738 (KELAPTTT). Residues 739–746 (KEPTSTTS) form a 46; approximate repeat. The 47; approximate repeat unit spans residues 747-754 (DKPAPTTP). Residues 755–762 (KGTAPTTP) form a 48; approximate repeat. The segment covering 762-776 (PKEPAPTTPKEPAPT) has biased composition (pro residues). 2 tandem repeats follow at residues 763-770 (KEPAPTTP) and 771-778 (KEPAPTTP). O-linked (GalNAc...) threonine glycans are attached at residues T768, T769, T776, and T777. Low complexity predominate over residues 777-790 (TPKGTAPTTLKEPA). Residues 779 to 786 (KGTAPTTL) form a 51; approximate repeat. The stretch at 787 to 794 (KEPAPTTP) is repeat 52. 3 O-linked (GalNAc...) threonine glycosylation sites follow: T792, T793, and T805. A compositionally biased stretch (low complexity) spans 797–830 (PAPKELAPTTTKGPTSTTSDKPAPTTPKETAPTT). One copy of the 53; approximate repeat lies at 800–807 (KELAPTTT). Residues 808-815 (KGPTSTTS) form a 54; approximate repeat. Residue S812 is glycosylated (O-linked (GalNAc...) serine). Residues 816-823 (DKPAPTTP) form a 55; approximate repeat. Residues 824 to 831 (KETAPTTP) form a 56; approximate repeat. O-linked (GalNAc...) threonine glycosylation is found at T829, T837, and T838. A compositionally biased stretch (pro residues) spans 831–853 (PKEPAPTTPKKPAPTTPETPPPT). 2 repeat units span residues 832–839 (KEPAPTTP) and 840–847 (KKPAPTTP). The 59; approximate repeat unit spans residues 848-855 (ETPPPTTS). Positions 854 to 866 (TSEVSTPTTTKEP) are enriched in low complexity. S892 is a glycosylation site (O-linked (GalNAc...) serine). The segment covering 899–914 (PTTKTPAATKPEMTTT) has biased composition (low complexity). An O-linked (GalNAc...) threonine glycan is attached at T900. Basic and acidic residues predominate over residues 915–926 (AKDKTTERDLRT). Low complexity predominate over residues 927–966 (TPETTTAAPKMTKETATTTEKTTESKITATTTQVTSTTTQ). 2 O-linked (GalNAc...) threonine glycosylation sites follow: T930 and T931. An O-linked (GalNAc...) serine glycan is attached at S962. O-linked (GalNAc...) threonine glycans are attached at residues T963, T968, T975, T978, T979, and T980. The disordered stretch occupies residues 992–1104 (ITTTEIMNKP…EDAGGAEGET (113 aa)). Over residues 999-1012 (NKPEETAKPKDRAT) the composition is skewed to basic and acidic residues. The segment covering 1026–1047 (KAPKKPTSTKKPKTMPRVRKPK) has biased composition (basic residues). A glycan (O-linked (GalNAc...) threonine) is linked at T1039. Residues 1048 to 1060 (TTPTPRKMTSTMP) are compositionally biased toward low complexity. Over residues 1073–1085 (LQTTTRPNQTPNS) the composition is skewed to polar residues. A disulfide bridge connects residues C1146 and C1403. Hemopexin repeat units follow at residues 1148-1191 (GKPV…VWGI) and 1192-1239 (PSPI…FGGL). N1159 carries N-linked (GlcNAc...) asparagine glycosylation. T1161 carries O-linked (GalNAc...) threonine glycosylation.

Homodimer; disulfide-linked. N-glycosylated. Post-translationally, O-glycosylated; contains glycosaminoglycan chondroitin sulfate and keratan sulfate. O-glycosylated with sialylated oligosaccharides which are predominantly represented by the monosialylated core type I structure, NeuNAcalpha2-3Galbeta1-3GalNAc, with smaller amounts of disialylated O-glycans. In terms of processing, the disulfide bond between Cys-1146 and Cys-1403 is essential for protein cleavage. Proteolytically cleaved by cathepsin CTSG. In terms of tissue distribution, highly expressed in synovial tissue, cartilage and liver and weakly in heart and lung. Isoform B is expressed in kidney, lung, liver, heart and brain. Isoform C and isoform D are widely expressed.

The protein resides in the secreted. Functionally, plays a role in boundary lubrication within articulating joints. Prevents protein deposition onto cartilage from synovial fluid by controlling adhesion-dependent synovial growth and inhibiting the adhesion of synovial cells to the cartilage surface. In terms of biological role, isoform F plays a role as a growth factor acting on the primitive cells of both hematopoietic and endothelial cell lineages. The protein is Proteoglycan 4 (PRG4) of Homo sapiens (Human).